The chain runs to 209 residues: Na(+)-translocating NADH-quinone reductase subunit D (209 aa).

Transmembrane regions (helical) follow at residues 42 to 62 (LVMTLAVTLVTAFSSFFISLI), 66 to 86 (IPNSVRIIVQMVIIASLVIVV), 103 to 123 (VFVGLIITNCIVMGRAEAYAM), 131 to 151 (FMDGIGNGLGYGVILVLVGFV), and 178 to 198 (NGLFLLAPSAFFIIGLLIWGL).

Belongs to the NqrDE/RnfAE family. As to quaternary structure, composed of six subunits; NqrA, NqrB, NqrC, NqrD, NqrE and NqrF.

It is found in the cell inner membrane. It catalyses the reaction a ubiquinone + n Na(+)(in) + NADH + H(+) = a ubiquinol + n Na(+)(out) + NAD(+). In terms of biological role, NQR complex catalyzes the reduction of ubiquinone-1 to ubiquinol by two successive reactions, coupled with the transport of Na(+) ions from the cytoplasm to the periplasm. NqrA to NqrE are probably involved in the second step, the conversion of ubisemiquinone to ubiquinol. The polypeptide is Na(+)-translocating NADH-quinone reductase subunit D (Yersinia pseudotuberculosis serotype O:1b (strain IP 31758)).